The chain runs to 412 residues: Light-independent protochlorophyllide reductase subunit N (412 aa).

Residues C17, C42, and C103 each coordinate [4Fe-4S] cluster.

This sequence belongs to the BchN/ChlN family. In terms of assembly, protochlorophyllide reductase is composed of three subunits; ChlL, ChlN and ChlB. Forms a heterotetramer of two ChlB and two ChlN subunits. It depends on [4Fe-4S] cluster as a cofactor.

The catalysed reaction is chlorophyllide a + oxidized 2[4Fe-4S]-[ferredoxin] + 2 ADP + 2 phosphate = protochlorophyllide a + reduced 2[4Fe-4S]-[ferredoxin] + 2 ATP + 2 H2O. Its pathway is porphyrin-containing compound metabolism; chlorophyll biosynthesis (light-independent). In terms of biological role, component of the dark-operative protochlorophyllide reductase (DPOR) that uses Mg-ATP and reduced ferredoxin to reduce ring D of protochlorophyllide (Pchlide) to form chlorophyllide a (Chlide). This reaction is light-independent. The NB-protein (ChlN-ChlB) is the catalytic component of the complex. The protein is Light-independent protochlorophyllide reductase subunit N of Synechococcus sp. (strain CC9902).